Consider the following 852-residue polypeptide: Protein SEY1 (852 aa).

Over 1 to 738 the chain is Cytoplasmic; that stretch reads MNGHFAAIGN…KRSAIGGITQ (738 aa). The GB1/RHD3-type G domain maps to 47-294; it reads GFNYHLISVF…IPADGLSVYA (248 aa). GTP is bound at residue 57–64; the sequence is GSQSTGKS. A coiled-coil region spans residues 475–500; sequence QYKLFEKELDEVSARLRKEEMRRLAI. Residues 739–759 traverse the membrane as a helical segment; that stretch reads VPLYFYVILLILGWNEILMVL. Residues 760–762 lie on the Lumenal side of the membrane; sequence RNP. A helical transmembrane segment spans residues 763–783; sequence FLILLILVMGGGTYIAYSLNL. Over 784 to 852 the chain is Cytoplasmic; it reads LGPMMQMSNA…AQDISDDDDI (69 aa).

It belongs to the TRAFAC class dynamin-like GTPase superfamily. GB1/RHD3 GTPase family. RHD3 subfamily.

Its subcellular location is the endoplasmic reticulum membrane. Functionally, cooperates with the reticulon proteins and tubule-shaping DP1 family proteins to generate and maintain the structure of the tubular endoplasmic reticulum network. Has GTPase activity, which is required for its function in ER organization. In Podospora anserina (strain S / ATCC MYA-4624 / DSM 980 / FGSC 10383) (Pleurage anserina), this protein is Protein SEY1.